A 406-amino-acid polypeptide reads, in one-letter code: Succinylornithine transaminase (406 aa).

Lys252 is modified (N6-(pyridoxal phosphate)lysine).

The protein belongs to the class-III pyridoxal-phosphate-dependent aminotransferase family. AstC subfamily. Pyridoxal 5'-phosphate is required as a cofactor.

It catalyses the reaction N(2)-succinyl-L-ornithine + 2-oxoglutarate = N-succinyl-L-glutamate 5-semialdehyde + L-glutamate. It functions in the pathway amino-acid degradation; L-arginine degradation via AST pathway; L-glutamate and succinate from L-arginine: step 3/5. In terms of biological role, catalyzes the transamination of N(2)-succinylornithine and alpha-ketoglutarate into N(2)-succinylglutamate semialdehyde and glutamate. Can also act as an acetylornithine aminotransferase. This is Succinylornithine transaminase from Escherichia coli (strain SMS-3-5 / SECEC).